A 214-amino-acid polypeptide reads, in one-letter code: Histone H1.1 (214 aa).

Positions 1–43 (MSETAPVPQPASVAPEKPAATKKTRKPAKAAVPRKKPAGPSVS) are disordered. N-acetylserine is present on Ser-2. 2 positions are modified to phosphoserine: Ser-2 and Ser-12. Residue Lys-17 is modified to N6-acetyllysine. The segment covering 20-37 (ATKKTRKPAKAAVPRKKP) has biased composition (basic residues). Position 36 is an N6-(beta-hydroxybutyryl)lysine (Lys-36). Positions 38-111 (AGPSVSELIV…GAAGSFKLNK (74 aa)) constitute an H15 domain. Phosphoserine is present on Ser-43. An N6-(beta-hydroxybutyryl)lysine modification is found at Lys-54. Residue Arg-56 is modified to Citrulline. An N6-(beta-hydroxybutyryl)lysine modification is found at Lys-66. Phosphoserine is present on Ser-67. Residue Lys-77 is modified to N6-acetyllysine. At Lys-87 the chain carries N6-(beta-hydroxybutyryl)lysine. An N6-(beta-hydroxybutyryl)lysine; alternate modification is found at Lys-92. N6-acetyllysine; alternate is present on Lys-92. A disordered region spans residues 93 to 214 (GTLVQTKGTG…KPKKAAPKKK (122 aa)). A Phosphoserine modification is found at Ser-106. Lys-108 carries the N6-(beta-hydroxybutyryl)lysine modification. The span at 116–144 (KASTTKVTVKAKASGAAKKPKKTAGAAAK) shows a compositional bias: low complexity. An N6-acetyllysine modification is found at Lys-121. 2 stretches are compositionally biased toward basic residues: residues 145-179 (KTVK…KKVA) and 186-214 (KAVK…PKKK). At Thr-202 the chain carries Phosphothreonine.

The protein belongs to the histone H1/H5 family. In terms of assembly, interacts with DFFB. Post-translationally, H1 histones are progressively phosphorylated during the cell cycle, becoming maximally phosphorylated during late G2 phase and M phase, and being dephosphorylated sharply thereafter. Citrullination at Arg-56 (H1R54ci) by PADI4 takes place within the DNA-binding site of H1 and results in its displacement from chromatin and global chromatin decondensation, thereby promoting pluripotency and stem cell maintenance.

The protein resides in the nucleus. It localises to the chromosome. In terms of biological role, H1 histones bind to linker DNA between nucleosomes forming the macromolecular structure known as the chromatin fiber. H1 histones are necessary for the condensation of nucleosome chains into higher-order structured fibers. Also acts as a regulator of individual gene transcription through chromatin remodeling. This chain is Histone H1.1, found in Rattus norvegicus (Rat).